The primary structure comprises 210 residues: MAGALKKTMIYLGLADGDEYDEQPRAAEREAAPRHEVVEARRPAEPDTDPHMEAVRPAAVRDPEPAERPEPVTPSGSTAAEPVEPRRPARPEPVDPGYRAPVTPIKRAAASSAEGASVHTLSTVHPRSYNDAKAIGESFRSGVPVIMNVTDLGENEAKRLVDFAAGLVFGLHGSISRITSKVFLLTPATVDVVGAEQGESSVADSPFDGD.

The interval 13 to 101 is disordered; that stretch reads GLADGDEYDE…EPVDPGYRAP (89 aa). Composition is skewed to basic and acidic residues over residues 22–70 and 83–93; these read EQPR…ERPE and VEPRRPARPEP.

This sequence belongs to the SepF family. Homodimer. Interacts with FtsZ.

It is found in the cytoplasm. Cell division protein that is part of the divisome complex and is recruited early to the Z-ring. Probably stimulates Z-ring formation, perhaps through the cross-linking of FtsZ protofilaments. Its function overlaps with FtsA. This is Cell division protein SepF from Micrococcus luteus (strain ATCC 4698 / DSM 20030 / JCM 1464 / CCM 169 / CCUG 5858 / IAM 1056 / NBRC 3333 / NCIMB 9278 / NCTC 2665 / VKM Ac-2230) (Micrococcus lysodeikticus).